The primary structure comprises 477 residues: Ribulose bisphosphate carboxylase large chain (477 aa).

A propeptide spanning residues 1–2 is cleaved from the precursor; that stretch reads MS. At Pro-3 the chain carries N-acetylproline. Lys-14 is modified (N6,N6,N6-trimethyllysine). Residues Asn-123 and Thr-173 each contribute to the substrate site. Lys-175 serves as the catalytic Proton acceptor. Substrate is bound at residue Lys-177. Mg(2+) is bound by residues Lys-201, Asp-203, and Glu-204. Lys-201 carries the post-translational modification N6-carboxylysine. Catalysis depends on His-294, which acts as the Proton acceptor. The substrate site is built by Arg-295, His-327, and Ser-379.

It belongs to the RuBisCO large chain family. Type I subfamily. As to quaternary structure, heterohexadecamer of 8 large chains and 8 small chains; disulfide-linked. The disulfide link is formed within the large subunit homodimers. The cofactor is Mg(2+). In terms of processing, the disulfide bond which can form in the large chain dimeric partners within the hexadecamer appears to be associated with oxidative stress and protein turnover.

The protein resides in the plastid. Its subcellular location is the chloroplast. The catalysed reaction is 2 (2R)-3-phosphoglycerate + 2 H(+) = D-ribulose 1,5-bisphosphate + CO2 + H2O. It catalyses the reaction D-ribulose 1,5-bisphosphate + O2 = 2-phosphoglycolate + (2R)-3-phosphoglycerate + 2 H(+). Functionally, ruBisCO catalyzes two reactions: the carboxylation of D-ribulose 1,5-bisphosphate, the primary event in carbon dioxide fixation, as well as the oxidative fragmentation of the pentose substrate in the photorespiration process. Both reactions occur simultaneously and in competition at the same active site. The polypeptide is Ribulose bisphosphate carboxylase large chain (rbcL) (Solanum lycopersicum (Tomato)).